The sequence spans 255 residues: MSLAIRIIPCLDVCDGRVVKGTKFIDIKDAGDPVEVAKRYDLEGADEIIFLDITASIDGRDTMIHMVEAIAEQVFIPLTVGGGIRKAADVRAILNAGADKITINSAAIFNPNLINQLSKEFGSQCIVIAIDAKKIDYNKWGIFTHGGRKYTGIDAIEWAKKMTCGDNGAGEVLLTSMDCDGVKTGFDLLLTRAVSDAVDVPVIASGGVGNLEHLSEGVLQGAADAVLAASIFHFGEYTIQQAKKAMQENGIKVRL.

Active-site residues include aspartate 12 and aspartate 131.

Belongs to the HisA/HisF family. Heterodimer of HisH and HisF.

Its subcellular location is the cytoplasm. The enzyme catalyses 5-[(5-phospho-1-deoxy-D-ribulos-1-ylimino)methylamino]-1-(5-phospho-beta-D-ribosyl)imidazole-4-carboxamide + L-glutamine = D-erythro-1-(imidazol-4-yl)glycerol 3-phosphate + 5-amino-1-(5-phospho-beta-D-ribosyl)imidazole-4-carboxamide + L-glutamate + H(+). It participates in amino-acid biosynthesis; L-histidine biosynthesis; L-histidine from 5-phospho-alpha-D-ribose 1-diphosphate: step 5/9. Functionally, IGPS catalyzes the conversion of PRFAR and glutamine to IGP, AICAR and glutamate. The HisF subunit catalyzes the cyclization activity that produces IGP and AICAR from PRFAR using the ammonia provided by the HisH subunit. The protein is Imidazole glycerol phosphate synthase subunit HisF of Vesicomyosocius okutanii subsp. Calyptogena okutanii (strain HA).